Consider the following 131-residue polypeptide: MVSALYAVLSALLLMKFSFDVVRLRMQYRVAYGDGGFSELQSAIRIHGNAVEYIPIAIVLMLFMEMNGAETWMVHICGIVLLAGRLMHYYGFHHRLFRWRRSGMSATWCALLLMVLANLWYMPWELVFSLR.

Residues 1-107 (MVSALYAVLS…RWRRSGMSAT (107 aa)) are Cytoplasmic-facing. The helical transmembrane segment at 108 to 128 (WCALLLMVLANLWYMPWELVF) threads the bilayer. Over 129 to 131 (SLR) the chain is Periplasmic.

The protein resides in the cell inner membrane. The protein is Inner membrane protein YecN (yecN) of Escherichia coli O6:H1 (strain CFT073 / ATCC 700928 / UPEC).